Here is a 404-residue protein sequence, read N- to C-terminus: uncharacterized protein (404 aa).

Transmembrane regions (helical) follow at residues 35-55 (ILFS…FTFL) and 92-112 (EDIW…ISSI).

Its subcellular location is the membrane. This is an uncharacterized protein from Saccharomyces cerevisiae (strain ATCC 204508 / S288c) (Baker's yeast).